Here is a 422-residue protein sequence, read N- to C-terminus: Tryptophan synthase beta chain (422 aa).

An N6-(pyridoxal phosphate)lysine modification is found at lysine 111.

This sequence belongs to the TrpB family. In terms of assembly, tetramer of two alpha and two beta chains. The cofactor is pyridoxal 5'-phosphate.

The enzyme catalyses (1S,2R)-1-C-(indol-3-yl)glycerol 3-phosphate + L-serine = D-glyceraldehyde 3-phosphate + L-tryptophan + H2O. Its pathway is amino-acid biosynthesis; L-tryptophan biosynthesis; L-tryptophan from chorismate: step 5/5. The beta subunit is responsible for the synthesis of L-tryptophan from indole and L-serine. This chain is Tryptophan synthase beta chain, found in Pseudothermotoga lettingae (strain ATCC BAA-301 / DSM 14385 / NBRC 107922 / TMO) (Thermotoga lettingae).